The primary structure comprises 254 residues: 3-deoxy-manno-octulosonate cytidylyltransferase (254 aa).

This sequence belongs to the KdsB family.

It localises to the cytoplasm. It carries out the reaction 3-deoxy-alpha-D-manno-oct-2-ulosonate + CTP = CMP-3-deoxy-beta-D-manno-octulosonate + diphosphate. It participates in nucleotide-sugar biosynthesis; CMP-3-deoxy-D-manno-octulosonate biosynthesis; CMP-3-deoxy-D-manno-octulosonate from 3-deoxy-D-manno-octulosonate and CTP: step 1/1. It functions in the pathway bacterial outer membrane biogenesis; lipopolysaccharide biosynthesis. Activates KDO (a required 8-carbon sugar) for incorporation into bacterial lipopolysaccharide in Gram-negative bacteria. In Pseudomonas aeruginosa (strain LESB58), this protein is 3-deoxy-manno-octulosonate cytidylyltransferase.